The following is a 123-amino-acid chain: Ribosome-binding factor A (123 aa).

It belongs to the RbfA family. Monomer. Binds 30S ribosomal subunits, but not 50S ribosomal subunits or 70S ribosomes.

It is found in the cytoplasm. In terms of biological role, one of several proteins that assist in the late maturation steps of the functional core of the 30S ribosomal subunit. Associates with free 30S ribosomal subunits (but not with 30S subunits that are part of 70S ribosomes or polysomes). Required for efficient processing of 16S rRNA. May interact with the 5'-terminal helix region of 16S rRNA. The sequence is that of Ribosome-binding factor A from Legionella pneumophila (strain Paris).